We begin with the raw amino-acid sequence, 148 residues long: MTKLEDLRPTPGSVKPRKRVGRGIGSGHGKTSGRGHKGQKSRGSGKVHMWLEGGQTPLHRRLPKVGFKSFTHKNYAIVNIRLLEEKFSANDEITPELLLEKGFIKKIKDGVKILGSGELTKPLIVKAHAFSNSAKKAIEMVGGKVEVI.

The interval 1 to 47 (MTKLEDLRPTPGSVKPRKRVGRGIGSGHGKTSGRGHKGQKSRGSGKV) is disordered. Residues 31–45 (TSGRGHKGQKSRGSG) are compositionally biased toward basic residues.

The protein belongs to the universal ribosomal protein uL15 family. In terms of assembly, part of the 50S ribosomal subunit.

Its function is as follows. Binds to the 23S rRNA. This chain is Large ribosomal subunit protein uL15, found in Pseudothermotoga lettingae (strain ATCC BAA-301 / DSM 14385 / NBRC 107922 / TMO) (Thermotoga lettingae).